The following is a 513-amino-acid chain: Ribonuclease Y (513 aa).

The helical transmembrane segment at 6-26 (YIIIAVVIIIICVILGLYVVD) threads the bilayer. Residues 35-59 (EASKEARRLKEEAERDAEAKKKEAI) are disordered. In terms of domain architecture, KH spans 203–288 (TVHVVNLPND…EMVEKAKKEV (86 aa)). Positions 329–422 (VLKHSIEVSH…VQAADAISAA (94 aa)) constitute an HD domain.

It belongs to the RNase Y family.

The protein resides in the cell membrane. Its function is as follows. Endoribonuclease that initiates mRNA decay. This Clostridium botulinum (strain Okra / Type B1) protein is Ribonuclease Y.